Consider the following 353-residue polypeptide: S-adenosylmethionine:tRNA ribosyltransferase-isomerase (353 aa).

Belongs to the QueA family. Monomer.

It is found in the cytoplasm. It carries out the reaction 7-aminomethyl-7-carbaguanosine(34) in tRNA + S-adenosyl-L-methionine = epoxyqueuosine(34) in tRNA + adenine + L-methionine + 2 H(+). Its pathway is tRNA modification; tRNA-queuosine biosynthesis. Transfers and isomerizes the ribose moiety from AdoMet to the 7-aminomethyl group of 7-deazaguanine (preQ1-tRNA) to give epoxyqueuosine (oQ-tRNA). The sequence is that of S-adenosylmethionine:tRNA ribosyltransferase-isomerase from Cupriavidus metallidurans (strain ATCC 43123 / DSM 2839 / NBRC 102507 / CH34) (Ralstonia metallidurans).